We begin with the raw amino-acid sequence, 429 residues long: Adenylosuccinate synthetase (429 aa).

Residues 12 to 18 (GDEGKGK) and 40 to 42 (GHT) each bind GTP. Asp-13 serves as the catalytic Proton acceptor. Residues Asp-13 and Gly-40 each contribute to the Mg(2+) site. IMP-binding positions include 13–16 (DEGK), 38–41 (NAGH), Thr-129, Arg-143, Gln-224, Thr-239, and Arg-303. The active-site Proton donor is His-41. 299–305 (VTTGRAR) lines the substrate pocket. GTP-binding positions include Arg-305, 331-333 (KLD), and 413-415 (GVG).

This sequence belongs to the adenylosuccinate synthetase family. As to quaternary structure, homodimer. Mg(2+) serves as cofactor.

It localises to the cytoplasm. It carries out the reaction IMP + L-aspartate + GTP = N(6)-(1,2-dicarboxyethyl)-AMP + GDP + phosphate + 2 H(+). It participates in purine metabolism; AMP biosynthesis via de novo pathway; AMP from IMP: step 1/2. Its function is as follows. Plays an important role in the de novo pathway of purine nucleotide biosynthesis. Catalyzes the first committed step in the biosynthesis of AMP from IMP. The sequence is that of Adenylosuccinate synthetase from Rhodococcus opacus (strain B4).